We begin with the raw amino-acid sequence, 236 residues long: Orotidine 5'-phosphate decarboxylase (236 aa).

Residues D16, K38, 65 to 74 (DLKLHDIGNT), T123, R184, Q193, G213, and R214 each bind substrate. The active-site Proton donor is K67.

The protein belongs to the OMP decarboxylase family. Type 1 subfamily. In terms of assembly, homodimer.

The catalysed reaction is orotidine 5'-phosphate + H(+) = UMP + CO2. Its pathway is pyrimidine metabolism; UMP biosynthesis via de novo pathway; UMP from orotate: step 2/2. Catalyzes the decarboxylation of orotidine 5'-monophosphate (OMP) to uridine 5'-monophosphate (UMP). In Methylobacterium sp. (strain 4-46), this protein is Orotidine 5'-phosphate decarboxylase.